The primary structure comprises 168 residues: Pleiotrophin (168 aa).

Residues 1-32 (MQTPQFLQQRRKFAAAFLAFIFLLAVVDTAEA) form the signal peptide. 5 cysteine pairs are disulfide-bonded: C47/C76, C55/C85, C62/C89, C99/C131, and C109/C141. 2 chondroitin sulfate binding regions span residues 92–99 (KKQFGAEC) and 123–131 (KRALHNADC). Residues 139–168 (KPCGKVTKPKPQAESKKKKKEGKKQEKMLD) are disordered. Positions 147-168 (PKPQAESKKKKKEGKKQEKMLD) are chondroitin sulfate A binding.

It belongs to the pleiotrophin family. Interacts with ALK and NEK6. Interacts with PTPRZ1 (via chondroitin sulfate groups); promotes formation of homooligomers; oligomerization impairs tyrosine phosphatase activity. Forms a complex with PTPRZ1 and CTNNB1; this complex inactivates PTPRZ1 protein tyrosine phosphatase activity through PTN interaction and stimulates tyrosine phosphorylation of CTNNB1. Interacts with ITGB3 and ITGA5. Forms a complex with PTPRZ1 and integrin alpha-V/beta-3 (ITGAV:ITGB3) that stimulates endothelial cell migration through ITGB3 'Tyr-773' phosphorylation. Interacts with SDC3 (via heparan sulfate chains); this interaction mediates the neurite outgrowth-promoting signal from PTN to the cytoskeleton of growing neurites; this interaction mediates osteoblast recruitment. Interacts with GPC2 (via heparan sulfate); this interaction promotes neurite outgrowth through binding of PTN with chondroitin sulfate of proteoglycans, thereby releasing PTPRS of chondroitin sulfate proteoglycans (CSPGs) and leading to binding with heparan sulfate of GPC2. Post-translationally, phosphorylated by NEK6.

The protein localises to the secreted. Its function is as follows. Secreted growth factor that mediates its signal through cell-surface proteoglycan and non-proteoglycan receptors. Binds cell-surface proteoglycan receptor via their chondroitin sulfate (CS) groups. Thereby regulates many processes like cell proliferation, cell survival, cell growth, cell differentiation and cell migration in several tissues namely neuron and bone. Also plays a role in synaptic plasticity and learning-related behavior by inhibiting long-term synaptic potentiation. Binds PTPRZ1, leading to neutralization of the negative charges of the CS chains of PTPRZ1, inducing PTPRZ1 clustering, thereby causing the dimerization and inactivation of its phosphatase activity leading to increased tyrosine phosphorylation of each of the PTPRZ1 substrates like ALK, CTNNB1 or AFAP1L2 in order to activate the PI3K-AKT pathway. Through PTPRZ1 binding controls oligodendrocyte precursor cell differentiation by enhancing the phosphorylation of AFAP1L2 in order to activate the PI3K-AKT pathway. Forms a complex with PTPRZ1 and integrin alpha-V/beta-3 (ITGAV:ITGB3) that stimulates endothelial cell migration through SRC dephosphorylation and activation that consequently leads to ITGB3 'Tyr-773' phosphorylation. In adult hippocampus promotes dendritic arborization, spine development, and functional integration and connectivity of newborn granule neurons through ALK by activating AKT signaling pathway. Binds GPC2 and chondroitin sulfate proteoglycans (CSPGs) at the neuron surface, leading to abrogation of binding between PTPRS and CSPGs and neurite outgrowth promotion. Binds SDC3 and mediates bone formation by recruiting and attaching osteoblasts/osteoblast precursors to the sites for new bone deposition. Binds ALK and promotes cell survival and cell proliferation through MAPK pathway activation. Inhibits proliferation and enhances differentiation of neural stem cells by inhibiting FGF2-induced fibroblast growth factor receptor signaling pathway. Mediates regulatory mechanisms in normal hemostasis and in hematopoietic regeneration and in maintaining the balance of myeloid and lymphoid regeneration. In addition may play a role in the female reproductive system, auditory response and the progesterone-induced decidualization pathway. In Sus scrofa (Pig), this protein is Pleiotrophin.